We begin with the raw amino-acid sequence, 276 residues long: MIRPDRCPWQPCPSGRYLSRPSGRVPRSTMMTPMTAMPAVTAMPPETAAPPETAAPARPLRPVQALLVVDVQTAFVSGAEAVPEAARVLDRTRGLLARARTAGALVVHLQNDGAPGAVDAPHTPGWELHLPVEPGPREHVVRKTEDDGFADTGLGALLDAAGVTELAVCGVLSEMCVAATARTALELGHRVVLPHDAHATYDIPAAPDISDTVPAAMSSRAAEWALGDEVEIVPRAAAVPFVAPPLAPAPEAPAAAAAPAAGTGLSPAGPPPAPAR.

Cys176 (nucleophile) is an active-site residue. The interval 250 to 276 (PEAPAAAAAPAAGTGLSPAGPPPAPAR) is disordered. Positions 252-267 (APAAAAAPAAGTGLSP) are enriched in low complexity.

The protein belongs to the isochorismatase family. Homodimer. Requires Does not require a metal cofactor. as cofactor.

It catalyses the reaction streptothricin F + H2O = streptothricin F acid. Catalyzes the hydrolysis of the amide bond of streptolidine lactam, thereby conferring streptothricin (ST) resistance. Can hydrolyze streptothricin-F and streptothricin-D. However, this strain is believed to be a ST nonproducer, which raises the possibility that its true role may not be its involvement in self-resistance to STs. May catalyze the hydrolysis of naturally occurring cyclic amide compounds that are structurally related to STs. The protein is Streptothricin hydrolase (sttH) of Streptomyces noursei (Streptomyces albulus).